Consider the following 404-residue polypeptide: NADH-quinone oxidoreductase subunit D 1 (404 aa).

This sequence belongs to the complex I 49 kDa subunit family. As to quaternary structure, NDH-1 is composed of 14 different subunits. Subunits NuoB, C, D, E, F, and G constitute the peripheral sector of the complex.

The protein resides in the cell inner membrane. The catalysed reaction is a quinone + NADH + 5 H(+)(in) = a quinol + NAD(+) + 4 H(+)(out). In terms of biological role, NDH-1 shuttles electrons from NADH, via FMN and iron-sulfur (Fe-S) centers, to quinones in the respiratory chain. The immediate electron acceptor for the enzyme in this species is believed to be ubiquinone. Couples the redox reaction to proton translocation (for every two electrons transferred, four hydrogen ions are translocated across the cytoplasmic membrane), and thus conserves the redox energy in a proton gradient. The polypeptide is NADH-quinone oxidoreductase subunit D 1 (Sorangium cellulosum (strain So ce56) (Polyangium cellulosum (strain So ce56))).